The sequence spans 249 residues: Probable transcriptional regulatory protein FN1661 (249 aa).

A compositionally biased stretch (polar residues) spans 1–10 (MSGHSKWNNI). The disordered stretch occupies residues 1–20 (MSGHSKWNNIQHRKGAQDKK).

The protein belongs to the TACO1 family.

The protein resides in the cytoplasm. In Fusobacterium nucleatum subsp. nucleatum (strain ATCC 25586 / DSM 15643 / BCRC 10681 / CIP 101130 / JCM 8532 / KCTC 2640 / LMG 13131 / VPI 4355), this protein is Probable transcriptional regulatory protein FN1661.